A 158-amino-acid chain; its full sequence is UPF0329 protein ECU06_0050 (158 aa).

This sequence belongs to the UPF0329 family.

This Encephalitozoon cuniculi (strain GB-M1) (Microsporidian parasite) protein is UPF0329 protein ECU06_0050.